The chain runs to 353 residues: Photosystem II protein D1 (353 aa).

At threonine 2 the chain carries N-acetylthreonine. Threonine 2 is modified (phosphothreonine). 3 helical membrane-spanning segments follow: residues 29–46 (YIGW…TATS), 118–133 (HFLL…EWEL), and 142–156 (WIAV…AATA). A chlorophyll a-binding site is contributed by histidine 118. Position 126 (tyrosine 126) interacts with pheophytin a. [CaMn4O5] cluster is bound by residues aspartate 170 and glutamate 189. Residues 197 to 218 (FHMLGVAGVFGGSLFSAMHGSL) form a helical membrane-spanning segment. Position 198 (histidine 198) interacts with chlorophyll a. A quinone-binding positions include histidine 215 and 264-265 (SF). Histidine 215 contacts Fe cation. Histidine 272 is a Fe cation binding site. The helical transmembrane segment at 274–288 (LLAAWPVVGIWFTAL) threads the bilayer. [CaMn4O5] cluster is bound by residues histidine 332, glutamate 333, aspartate 342, and alanine 344. Positions 345–353 (AVEAPSTNG) are excised as a propeptide.

This sequence belongs to the reaction center PufL/M/PsbA/D family. As to quaternary structure, PSII is composed of 1 copy each of membrane proteins PsbA, PsbB, PsbC, PsbD, PsbE, PsbF, PsbH, PsbI, PsbJ, PsbK, PsbL, PsbM, PsbT, PsbX, PsbY, PsbZ, Psb30/Ycf12, at least 3 peripheral proteins of the oxygen-evolving complex and a large number of cofactors. It forms dimeric complexes. It depends on The D1/D2 heterodimer binds P680, chlorophylls that are the primary electron donor of PSII, and subsequent electron acceptors. It shares a non-heme iron and each subunit binds pheophytin, quinone, additional chlorophylls, carotenoids and lipids. D1 provides most of the ligands for the Mn4-Ca-O5 cluster of the oxygen-evolving complex (OEC). There is also a Cl(-1) ion associated with D1 and D2, which is required for oxygen evolution. The PSII complex binds additional chlorophylls, carotenoids and specific lipids. as a cofactor. Tyr-161 forms a radical intermediate that is referred to as redox-active TyrZ, YZ or Y-Z. Post-translationally, C-terminally processed by CTPA; processing is essential to allow assembly of the oxygen-evolving complex and thus photosynthetic growth.

It localises to the plastid. It is found in the chloroplast thylakoid membrane. It catalyses the reaction 2 a plastoquinone + 4 hnu + 2 H2O = 2 a plastoquinol + O2. In terms of biological role, photosystem II (PSII) is a light-driven water:plastoquinone oxidoreductase that uses light energy to abstract electrons from H(2)O, generating O(2) and a proton gradient subsequently used for ATP formation. It consists of a core antenna complex that captures photons, and an electron transfer chain that converts photonic excitation into a charge separation. The D1/D2 (PsbA/PsbD) reaction center heterodimer binds P680, the primary electron donor of PSII as well as several subsequent electron acceptors. The polypeptide is Photosystem II protein D1 (Dioscorea elephantipes (Elephant's foot yam)).